The following is a 382-amino-acid chain: MDGNSTHPAPNLKTTMAWSRISNQLGHWNDRKVIAIPLSDFLNTHPDIQSGIIAEFKKATGEEGMFARDPESLGIMLLGPVKLFKPDSVVVDGNLFWDPKGIHASAPKEQQKKAKIPRPPNAYILYRKDHHREIREQNPGLHNNEISVIVGNMWRDEQPHIREKYFNMSNEIKTRLLLENPDYRYNPRRSQDIRRRVSPYLKIKLLNYDVNGNLLWGTVNAEDAALIRTHFHGVVRVEEMDDGCRIVCRPVAGSRKLRAAVVDTWMPRYTVDTTPVTEDDDAQAFNFNDPLGGAYFPLNEHLWITVNQNPPFNAPPPNPNPHLDFVHPDGMEAVVHNVQNMIAQVQEANEAAALTLPPPPPLRLLSLRLWLMIPLTQLSFPL.

A DNA-binding region (HMG box) is located at residues 116 to 184 (IPRPPNAYIL…RLLLENPDYR (69 aa)).

As to quaternary structure, binds in vitro to DNA containing a specific core sequence 5'-CTTTG-3'.

It localises to the nucleus. Functionally, mating type proteins are sequence specific DNA-binding proteins that act as master switches in yeast differentiation by controlling gene expression in a cell type-specific fashion. Transcriptional activator that induces the transcription of a-specific genes like mating factor mfa-1. Required for mating as an a-cell, blocking of heterokaryon formation (vegetative incompatibility) and for perithecium induction. The polypeptide is Mating-type protein a-1 (mta-1) (Neurospora crassa).